Here is a 240-residue protein sequence, read N- to C-terminus: Transcription factor bHLH47 (240 aa).

Positions 1–13 (MVSKTPSTSSDEA) are enriched in polar residues. The tract at residues 1–26 (MVSKTPSTSSDEANATADERCRKGKV) is disordered. One can recognise a bHLH domain in the interval 27–77 (PKRINKAVRERLKREHLNELFIELADTLELNQQNSGKASILCEATRFLKDV). Positions 98–131 (VTTEKNELKEETSVLETEISKLQNEIEARANQSK) form a coiled coil. Residues 128 to 138 (NQSKPDLNTSP) show a composition bias toward polar residues. The disordered stretch occupies residues 128 to 153 (NQSKPDLNTSPAPEYHHHHYQQQHPE).

In terms of assembly, homodimer. Forms heterodimer with PYEL proteins bHLH115, bHLH104 and ILR3. Expressed constitutively in roots, leaves, stems, and flowers.

Its subcellular location is the nucleus. The protein is Transcription factor bHLH47 (BHLH47) of Arabidopsis thaliana (Mouse-ear cress).